The sequence spans 433 residues: Enolase (433 aa).

Gln167 is a (2R)-2-phosphoglycerate binding site. The active-site Proton donor is the Glu209. A Mg(2+)-binding site is contributed by Asp246. The short motif at 252–260 (FYDAEKKEY) is the Plasminogen-binding motif element. 2 residues coordinate Mg(2+): Glu291 and Asp318. Lys343, Arg372, Ser373, and Lys394 together coordinate (2R)-2-phosphoglycerate. The active-site Proton acceptor is Lys343.

Belongs to the enolase family. Component of the RNA degradosome, a multiprotein complex involved in RNA processing and mRNA degradation. Requires Mg(2+) as cofactor.

It is found in the cell inner membrane. The protein resides in the cell outer membrane. It localises to the cytoplasm. Its subcellular location is the secreted. The protein localises to the cell surface. The catalysed reaction is (2R)-2-phosphoglycerate = phosphoenolpyruvate + H2O. It participates in carbohydrate degradation; glycolysis; pyruvate from D-glyceraldehyde 3-phosphate: step 4/5. Its function is as follows. Catalyzes the reversible conversion of 2-phosphoglycerate (2-PG) into phosphoenolpyruvate (PEP). It is essential for the degradation of carbohydrates via glycolysis. In terms of biological role, 'Moonlights' as a plasminogen receptor and plasmin activator. Binds host (human) plasminogen in vitro. Binds human plasmin and plasminogen on the cell surface; enhances the activity of host tissue-specific plasminogen activator (tPA). Plasmin bound to bacteria is partially protected from its physiological inhibitor alpha-2AP (SERPINF2). This chain is Enolase, found in Aeromonas hydrophila.